The primary structure comprises 64 residues: Sperm protamine P1 (64 aa).

The segment at 1–64 is disordered; sequence MVRYRRHSRS…QSRRRRRRRY (64 aa).

Belongs to the protamine P1 family. Testis.

The protein localises to the nucleus. It is found in the chromosome. Its function is as follows. Protamines substitute for histones in the chromatin of sperm during the haploid phase of spermatogenesis. They compact sperm DNA into a highly condensed, stable and inactive complex. This Dromiciops gliroides (Monito del Monte) protein is Sperm protamine P1 (PRM1).